The chain runs to 230 residues: 5'-methylthioadenosine/S-adenosylhomocysteine nucleosidase (230 aa).

Glu12 functions as the Proton acceptor in the catalytic mechanism. Substrate is bound by residues Gly78, Val152, and 173–174; that span reads ME. Asp197 (proton donor) is an active-site residue.

This sequence belongs to the PNP/UDP phosphorylase family. MtnN subfamily.

It carries out the reaction S-adenosyl-L-homocysteine + H2O = S-(5-deoxy-D-ribos-5-yl)-L-homocysteine + adenine. The enzyme catalyses S-methyl-5'-thioadenosine + H2O = 5-(methylsulfanyl)-D-ribose + adenine. The catalysed reaction is 5'-deoxyadenosine + H2O = 5-deoxy-D-ribose + adenine. It participates in amino-acid biosynthesis; L-methionine biosynthesis via salvage pathway; S-methyl-5-thio-alpha-D-ribose 1-phosphate from S-methyl-5'-thioadenosine (hydrolase route): step 1/2. In terms of biological role, catalyzes the irreversible cleavage of the glycosidic bond in both 5'-methylthioadenosine (MTA) and S-adenosylhomocysteine (SAH/AdoHcy) to adenine and the corresponding thioribose, 5'-methylthioribose and S-ribosylhomocysteine, respectively. Also cleaves 5'-deoxyadenosine, a toxic by-product of radical S-adenosylmethionine (SAM) enzymes, into 5-deoxyribose and adenine. This is 5'-methylthioadenosine/S-adenosylhomocysteine nucleosidase from Glaesserella parasuis serovar 5 (strain SH0165) (Haemophilus parasuis).